The sequence spans 162 residues: 2-C-methyl-D-erythritol 2,4-cyclodiphosphate synthase (162 aa).

The a divalent metal cation site is built by aspartate 10 and histidine 12. 4-CDP-2-C-methyl-D-erythritol 2-phosphate-binding positions include 10–12 (DVH) and 36–37 (HS). Histidine 44 contributes to the a divalent metal cation binding site. 4-CDP-2-C-methyl-D-erythritol 2-phosphate is bound by residues 58-60 (DIG), 63-67 (FSDTD), and arginine 144.

This sequence belongs to the IspF family. Homotrimer. A divalent metal cation is required as a cofactor.

The catalysed reaction is 4-CDP-2-C-methyl-D-erythritol 2-phosphate = 2-C-methyl-D-erythritol 2,4-cyclic diphosphate + CMP. It functions in the pathway isoprenoid biosynthesis; isopentenyl diphosphate biosynthesis via DXP pathway; isopentenyl diphosphate from 1-deoxy-D-xylulose 5-phosphate: step 4/6. Functionally, involved in the biosynthesis of isopentenyl diphosphate (IPP) and dimethylallyl diphosphate (DMAPP), two major building blocks of isoprenoid compounds. Catalyzes the conversion of 4-diphosphocytidyl-2-C-methyl-D-erythritol 2-phosphate (CDP-ME2P) to 2-C-methyl-D-erythritol 2,4-cyclodiphosphate (ME-CPP) with a corresponding release of cytidine 5-monophosphate (CMP). This chain is 2-C-methyl-D-erythritol 2,4-cyclodiphosphate synthase, found in Burkholderia thailandensis (strain ATCC 700388 / DSM 13276 / CCUG 48851 / CIP 106301 / E264).